Consider the following 447-residue polypeptide: MTKIITRFAPSPTGMLHVGNIRAALLNWLYAKKHNGQFILRFDDTDLERSKQEYKDAIEEDLKFLNLNWDQTFNQLSRLSRYDEIKNLLLDKKRLYACYETPEELELKRKFQLSKGLPPIYDRASLNLTEEQTQKYIEQGRKPHYRFLVNHEPISWHDMIKGEVKYDGKALSEPIVIRADGSMTYMLCSVIDDIDYDITHIIRGEDHVSNTAIQIQMFEALNTTPPTFGHLSLIINKDEKISKRVGGFEITTLRKEIGLEAMAIASFFSLLGSSAQILPYKSMEKLANQFEISSFSKSPTIYQPEDLERLNHKLLISLDFDEVKNHLKEIDAEYIDENFWLSVRPNLQKLRDVKDWWEICHKTPNVKSLNLDKEYLKQAAEVLPQGKITKDSWSIWTKEITNITGKKGKELFLPLRLALTGRESGPEIASVLPLIDREEIIKRLTSA.

A 'HIGH' region motif is present at residues 10–20 (PSPTGMLHVGN). Residues 240 to 244 (KISKR) carry the 'KMSKS' region motif. K243 is a binding site for ATP.

This sequence belongs to the class-I aminoacyl-tRNA synthetase family. Glutamate--tRNA ligase type 1 subfamily. Monomer.

The protein localises to the cytoplasm. It carries out the reaction tRNA(Glu) + L-glutamate + ATP = L-glutamyl-tRNA(Glu) + AMP + diphosphate. In terms of biological role, catalyzes the attachment of glutamate to tRNA(Glu) in a two-step reaction: glutamate is first activated by ATP to form Glu-AMP and then transferred to the acceptor end of tRNA(Glu). This chain is Glutamate--tRNA ligase 1, found in Rickettsia felis (strain ATCC VR-1525 / URRWXCal2) (Rickettsia azadi).